A 203-amino-acid chain; its full sequence is GTP cyclohydrolase 1 (203 aa).

Zn(2+) is bound by residues Cys87, His90, and Cys158.

This sequence belongs to the GTP cyclohydrolase I family. As to quaternary structure, toroid-shaped homodecamer, composed of two pentamers of five dimers.

The enzyme catalyses GTP + H2O = 7,8-dihydroneopterin 3'-triphosphate + formate + H(+). Its pathway is cofactor biosynthesis; 7,8-dihydroneopterin triphosphate biosynthesis; 7,8-dihydroneopterin triphosphate from GTP: step 1/1. The polypeptide is GTP cyclohydrolase 1 (Xylella fastidiosa (strain 9a5c)).